Here is a 632-residue protein sequence, read N- to C-terminus: Golgin subfamily A member 8N (632 aa).

Residues 1-76 form a disordered region; the sequence is MAEETQHNKL…TSSATLKDLE (76 aa). Polar residues predominate over residues 38-50; that stretch reads TNGSIPETATSGG. Coiled-coil stretches lie at residues 85–150 and 209–421; these read VLDS…TDLY and ELEQ…SLMA. Disordered stretches follow at residues 423–445, 505–524, and 552–573; these read PGEG…PMPS, DAAL…DEGE, and NSAD…ADKH. Residues 508–520 show a composition bias toward gly residues; the sequence is LGGGHHQAGAQGG.

Belongs to the GOLGA8 family.

This is Golgin subfamily A member 8N from Homo sapiens (Human).